The following is a 114-amino-acid chain: Evasin-1 (114 aa).

A signal peptide spans 1-20 (MTFKACIAIITALCAMQVIC). 4 cysteine pairs are disulfide-bonded: C32/C53, C49/C90, C66/C95, and C85/C104. Residues N39, N54, and N62 are each glycosylated (N-linked (GlcNAc...) asparagine).

Belongs to the evasin C8 family. In terms of assembly, monomer.

The protein localises to the secreted. Its function is as follows. Salivary chemokine-binding protein which shows chemokine neutralizing activity and binds to host chemokines CCL3, CCL4 and CCL18. Binds to CCL3 with 1:1 stoichiometry. This is Evasin-1 from Rhipicephalus sanguineus (Brown dog tick).